Consider the following 228-residue polypeptide: L-ribulose-5-phosphate 4-epimerase UlaF (228 aa).

Substrate-binding positions include 26–27 (GN), 43–44 (SG), and 72–73 (SS). Residues Asp-74, His-93, and His-95 each contribute to the Zn(2+) site. The active-site Proton donor/acceptor is the Asp-118. His-167 lines the Zn(2+) pocket. Tyr-225 serves as the catalytic Proton donor/acceptor.

The protein belongs to the aldolase class II family. AraD/FucA subfamily. Requires Zn(2+) as cofactor.

It carries out the reaction L-ribulose 5-phosphate = D-xylulose 5-phosphate. The protein operates within cofactor degradation; L-ascorbate degradation; D-xylulose 5-phosphate from L-ascorbate: step 4/4. Functionally, catalyzes the isomerization of L-ribulose 5-phosphate to D-xylulose 5-phosphate. Is involved in the anaerobic L-ascorbate utilization. This is L-ribulose-5-phosphate 4-epimerase UlaF from Escherichia coli O45:K1 (strain S88 / ExPEC).